A 398-amino-acid polypeptide reads, in one-letter code: Succinate--CoA ligase [ADP-forming] subunit beta (398 aa).

One can recognise an ATP-grasp domain in the interval 9–253 (KQVLAKYGVA…ESEEDPAELE (245 aa)). ATP-binding positions include Lys-46, 53–55 (GRG), Glu-108, Cys-111, and Glu-116. 2 residues coordinate Mg(2+): Asn-208 and Asp-222. Substrate-binding positions include Asn-273 and 330-332 (GIM).

The protein belongs to the succinate/malate CoA ligase beta subunit family. As to quaternary structure, heterotetramer of two alpha and two beta subunits. The cofactor is Mg(2+).

The enzyme catalyses succinate + ATP + CoA = succinyl-CoA + ADP + phosphate. It carries out the reaction GTP + succinate + CoA = succinyl-CoA + GDP + phosphate. Its pathway is carbohydrate metabolism; tricarboxylic acid cycle; succinate from succinyl-CoA (ligase route): step 1/1. Its function is as follows. Succinyl-CoA synthetase functions in the citric acid cycle (TCA), coupling the hydrolysis of succinyl-CoA to the synthesis of either ATP or GTP and thus represents the only step of substrate-level phosphorylation in the TCA. The beta subunit provides nucleotide specificity of the enzyme and binds the substrate succinate, while the binding sites for coenzyme A and phosphate are found in the alpha subunit. The sequence is that of Succinate--CoA ligase [ADP-forming] subunit beta from Paramagnetospirillum magneticum (strain ATCC 700264 / AMB-1) (Magnetospirillum magneticum).